The primary structure comprises 151 residues: Transcription antitermination protein NusB (151 aa).

The protein belongs to the NusB family.

In terms of biological role, involved in transcription antitermination. Required for transcription of ribosomal RNA (rRNA) genes. Binds specifically to the boxA antiterminator sequence of the ribosomal RNA (rrn) operons. This Thermus thermophilus (strain ATCC BAA-163 / DSM 7039 / HB27) protein is Transcription antitermination protein NusB.